The sequence spans 380 residues: Cytochrome b (380 aa).

4 consecutive transmembrane segments (helical) span residues 34–54, 78–99, 114–134, and 179–199; these read FGSL…LLAM, WLIR…YLHI, WNTG…GYVL, and FFAL…IHLT. 2 residues coordinate heme b: H84 and H98. The heme b site is built by H183 and H197. H202 contributes to the a ubiquinone binding site. The next 4 membrane-spanning stretches (helical) occupy residues 227-247, 289-309, 321-341, and 348-368; these read TKDI…ALFS, LGGV…PLLH, LSQL…WIGS, and FIII…ILFP.

It belongs to the cytochrome b family. The cytochrome bc1 complex contains 11 subunits: 3 respiratory subunits (MT-CYB, CYC1 and UQCRFS1), 2 core proteins (UQCRC1 and UQCRC2) and 6 low-molecular weight proteins (UQCRH/QCR6, UQCRB/QCR7, UQCRQ/QCR8, UQCR10/QCR9, UQCR11/QCR10 and a cleavage product of UQCRFS1). This cytochrome bc1 complex then forms a dimer. Requires heme b as cofactor.

It is found in the mitochondrion inner membrane. In terms of biological role, component of the ubiquinol-cytochrome c reductase complex (complex III or cytochrome b-c1 complex) that is part of the mitochondrial respiratory chain. The b-c1 complex mediates electron transfer from ubiquinol to cytochrome c. Contributes to the generation of a proton gradient across the mitochondrial membrane that is then used for ATP synthesis. This chain is Cytochrome b (MT-CYB), found in Pygoscelis antarcticus (Chinstrap penguin).